A 264-amino-acid chain; its full sequence is COP9 signalosome complex subunit 7b (264 aa).

At alanine 2 the chain carries N-acetylalanine. Residues 2 to 159 form the PCI domain; it reads AGEQKPSSNL…QLLEVDFCIG (158 aa). The stretch at 188-237 forms a coiled coil; sequence IEQQVLRANQYKENHNRTQQQVEAEVTNIKKTLKATASSSAQEMEQQLAE. The span at 223 to 232 shows a compositional bias: polar residues; sequence TASSSAQEME. The disordered stretch occupies residues 223 to 264; it reads TASSSAQEMEQQLAERECPPHAEQRQPTKKMSKVKGLVSSRH. Residues 235–248 show a composition bias toward basic and acidic residues; the sequence is LAERECPPHAEQRQ. Residue serine 261 is modified to Phosphothreonine. Arginine 263 carries the post-translational modification Phosphoserine.

It belongs to the CSN7/EIF3M family. CSN7 subfamily. Component of the CSN complex, composed of COPS1/GPS1, COPS2, COPS3, COPS4, COPS5, COPS6, COPS7 (COPS7A or COPS7B), COPS8 and COPS9 isoform 1. In the complex, it probably interacts directly with COPS1, COPS2, COPS4, COPS5, COPS6 and COPS8. Interacts with EIF3S6. As to quaternary structure, (Microbial infection) Interacts with vaccinia virus protein C9L.

The protein resides in the cytoplasm. Its subcellular location is the nucleus. Component of the COP9 signalosome complex (CSN), a complex involved in various cellular and developmental processes. The CSN complex is an essential regulator of the ubiquitin (Ubl) conjugation pathway by mediating the deneddylation of the cullin subunits of SCF-type E3 ligase complexes, leading to decrease the Ubl ligase activity of SCF-type complexes such as SCF, CSA or DDB2. The complex is also involved in phosphorylation of p53/TP53, JUN, I-kappa-B-alpha/NFKBIA, ITPK1 and IRF8/ICSBP, possibly via its association with CK2 and PKD kinases. CSN-dependent phosphorylation of TP53 and JUN promotes and protects degradation by the Ubl system, respectively. The protein is COP9 signalosome complex subunit 7b (COPS7B) of Homo sapiens (Human).